The sequence spans 956 residues: Chromatin assembly factor 1 subunit A (956 aa).

The tract at residues 1–49 (MLEELECGAPGARGAATAMDCKDRPAFPVKKLIQARLPFKRLNLVPKGK) is binds to PCNA. Positions 1-314 (MLEELECGAP…QHSSTSPFPT (314 aa)) are binds to CBX1 chromo shadow domain. 2 disordered regions span residues 45-65 (VPKG…QSKS) and 122-155 (DSNE…EDTG). Polar residues predominate over residues 56-65 (DQGTSVQSKS). Ser-65, Ser-123, Ser-138, Ser-141, and Ser-143 each carry phosphoserine. Lys-182 is covalently cross-linked (Glycyl lysine isopeptide (Lys-Gly) (interchain with G-Cter in SUMO1); alternate). Lys-182 participates in a covalent cross-link: Glycyl lysine isopeptide (Lys-Gly) (interchain with G-Cter in SUMO2); alternate. A disordered region spans residues 188-222 (VGCGGAGRRGDSQECSPRSCPELTSGPRMCPRKEQ). Phosphoserine occurs at positions 206 and 224. Residues 233–246 (FKGKVPMVVLQDIL) carry the PxVxL motif motif. 2 disordered regions span residues 250-432 (PPQI…KRLR) and 599-639 (DSDE…VPHG). 2 stretches are compositionally biased toward low complexity: residues 282–296 (LSHS…TSSP) and 307–317 (SSTSPFPTSTP). Phosphoserine is present on Ser-310. The segment covering 329-432 (STEKNKLRLQ…RKKEEEKRLR (104 aa)) has biased composition (basic and acidic residues). Composition is skewed to acidic residues over residues 599 to 610 (DSDEEWEEEEPG) and 618 to 633 (GDDD…EDDG). Positions 642 to 678 (SEDEGVTEECADPENHKVRQKLKAKEWDEFLAKGKRF) are necessary for homodimerization and competence for chromatin assembly. Positions 660 to 956 (RQKLKAKEWD…TLTASPLGAS (297 aa)) are binds to p60. The residue at position 722 (Thr-722) is a Phosphothreonine. Residues 765 to 790 (LLSNHTGSPRSPSTTYLHTPTPSEDA) form a disordered region. Residues 767 to 786 (SNHTGSPRSPSTTYLHTPTP) show a composition bias toward polar residues. Phosphoserine is present on residues Ser-772, Ser-775, and Ser-803. Disordered regions lie at residues 844–873 (SVPS…KRKS) and 933–956 (SGAG…LGAS). The segment covering 855 to 866 (SVPSTGPSQGTP) has biased composition (polar residues). Thr-865 bears the Phosphothreonine mark. 3 positions are modified to phosphoserine: Ser-868, Ser-873, and Ser-951.

This sequence belongs to the CHAF1A family. As to quaternary structure, homodimer. Part of the CAF-1 complex that contains RBBP4, CHAF1B and CHAF1A. CHAF1A binds directly to CHAF1B. Only minor amounts of RBBP4 are complexed with CHAF1A and CHAF1B in G1 phase. Interacts with PCNA; the interaction is direct. Interacts (via the PxVxL motif) with CBX5; the interaction is direct. Interacts with MBD1. Interacts with histones H3.1, H3.2 and H3.1t.

The protein resides in the nucleus. In terms of biological role, acts as a component of the histone chaperone complex chromatin assembly factor 1 (CAF-1), which assembles histone octamers onto DNA during replication and repair. CAF-1 performs the first step of the nucleosome assembly process, bringing newly synthesized histones H3 and H4 to replicating DNA; histones H2A/H2B can bind to this chromatin precursor subsequent to DNA replication to complete the histone octamer. It may play a role in heterochromatin maintenance in proliferating cells by bringing newly synthesized cbx proteins to heterochromatic DNA replication foci. The sequence is that of Chromatin assembly factor 1 subunit A from Homo sapiens (Human).